A 227-amino-acid polypeptide reads, in one-letter code: ATP-dependent dethiobiotin synthetase BioD (227 aa).

ATP is bound at residue 12 to 17 (DVGKTV). Thr16 serves as a coordination point for Mg(2+). The active site involves Lys37. Thr41 is a binding site for substrate. ATP-binding positions include Asp50, 110–113 (EGAG), 171–172 (GS), and 201–203 (PAG). Asp50 and Glu110 together coordinate Mg(2+).

This sequence belongs to the dethiobiotin synthetase family. As to quaternary structure, homodimer. Mg(2+) serves as cofactor.

It localises to the cytoplasm. It catalyses the reaction (7R,8S)-7,8-diammoniononanoate + CO2 + ATP = (4R,5S)-dethiobiotin + ADP + phosphate + 3 H(+). The protein operates within cofactor biosynthesis; biotin biosynthesis; biotin from 7,8-diaminononanoate: step 1/2. In terms of biological role, catalyzes a mechanistically unusual reaction, the ATP-dependent insertion of CO2 between the N7 and N8 nitrogen atoms of 7,8-diaminopelargonic acid (DAPA, also called 7,8-diammoniononanoate) to form a ureido ring. This Rhodococcus erythropolis (strain PR4 / NBRC 100887) protein is ATP-dependent dethiobiotin synthetase BioD.